Here is a 738-residue protein sequence, read N- to C-terminus: 1,4-alpha-glucan branching enzyme GlgB (738 aa).

The Nucleophile role is filled by D417. Residue E472 is the Proton donor of the active site.

The protein belongs to the glycosyl hydrolase 13 family. GlgB subfamily. As to quaternary structure, monomer.

It catalyses the reaction Transfers a segment of a (1-&gt;4)-alpha-D-glucan chain to a primary hydroxy group in a similar glucan chain.. Its pathway is glycan biosynthesis; glycogen biosynthesis. Catalyzes the formation of the alpha-1,6-glucosidic linkages in glycogen by scission of a 1,4-alpha-linked oligosaccharide from growing alpha-1,4-glucan chains and the subsequent attachment of the oligosaccharide to the alpha-1,6 position. The chain is 1,4-alpha-glucan branching enzyme GlgB from Burkholderia pseudomallei (strain 1106a).